The chain runs to 184 residues: Cyclin-dependent kinase inhibitor 1 (184 aa).

Residues 85 to 98 (ISSTTLTPLSSPST) show a composition bias toward low complexity. Positions 85-184 (ISSTTLTPLS…IRTRSSCSPY (100 aa)) are disordered.

The protein belongs to the CDI family. In terms of assembly, interacts with cyd-1; the interaction is direct. In embryos, expression is first seen in pharyngeal primordium and later in all differentiating cells. Post embryonic expression corresponds to developmental patterns of cell cycle progression in many tissues including sex myoblasts, distal tip cells, vulval cells, seam cells, neurons, intestine cells and hypodermal cells.

The protein localises to the nucleus. In terms of biological role, negative cell-cycle regulator that functions at the G1-to-S-phase transition. Required for suspension of the cell cycle in dauer larvae and starved L1 larvae. In vulval precursor cells (VPCs), a pathway of heterochronic genes acts via cki-1 to maintain VPCs in G1 during the L2 larval stage. Cul-2 may function in ubiquitin-mediated degradation by targeting cki-1 for degradation. Involved in distal tip cell development by repressing and modulating cye-1/cdk-2 activity levels in Z1.aa/Z4.pp and in Z1.ap/Z4.pa. This Caenorhabditis elegans protein is Cyclin-dependent kinase inhibitor 1.